The chain runs to 273 residues: Putative phosphoenolpyruvate synthase regulatory protein (273 aa).

153–160 (GVSRSGKT) is a binding site for ADP.

This sequence belongs to the pyruvate, phosphate/water dikinase regulatory protein family. PSRP subfamily.

It carries out the reaction [pyruvate, water dikinase] + ADP = [pyruvate, water dikinase]-phosphate + AMP + H(+). It catalyses the reaction [pyruvate, water dikinase]-phosphate + phosphate + H(+) = [pyruvate, water dikinase] + diphosphate. Bifunctional serine/threonine kinase and phosphorylase involved in the regulation of the phosphoenolpyruvate synthase (PEPS) by catalyzing its phosphorylation/dephosphorylation. This chain is Putative phosphoenolpyruvate synthase regulatory protein, found in Paracidovorax citrulli (strain AAC00-1) (Acidovorax citrulli).